The primary structure comprises 186 residues: Transcriptional repressor NrdR (186 aa).

A zinc finger lies at 3 to 34 (CPFCRHPDSRVVDSREAEEGAAIRRRRSCPAC). An ATP-cone domain is found at 46–136 (LRVRKRSGAT…VYLAFESLGD (91 aa)). The segment at 149 to 169 (AGGGEPPVAGKPTTMPAATGA) is disordered.

It belongs to the NrdR family. It depends on Zn(2+) as a cofactor.

Negatively regulates transcription of bacterial ribonucleotide reductase nrd genes and operons by binding to NrdR-boxes. The chain is Transcriptional repressor NrdR from Parafrankia sp. (strain EAN1pec).